The primary structure comprises 559 residues: uncharacterized protein (559 aa).

2 disordered regions span residues 315 to 360 (TDDA…ERDI) and 454 to 559 (DKID…STEN). Residues 320-329 (NENSDNSMNT) are compositionally biased toward polar residues. The span at 348–357 (DNNDDSDDSE) shows a compositional bias: acidic residues. Positions 433-495 (ELKIQEMEKI…KRRQKRSQRS (63 aa)) form a coiled coil. Over residues 454–501 (DKIDMDQIKSEMSRRRDESNKRRDEKRKDREEKRRQKRSQRSDTRKQG) the composition is skewed to basic and acidic residues. Positions 507-527 (SDEATSDQTQSTDSNNTTQTA) are enriched in low complexity.

The protein localises to the virion. This is an uncharacterized protein from Acanthamoeba polyphaga mimivirus (APMV).